The chain runs to 205 residues: Putative STAG3-like protein 1 (205 aa).

Residues 10-95 (PKVTCRDVLP…GRFKDWMVSM (86 aa)) enclose the SCD domain.

It belongs to the SCC3 family.

The protein resides in the nucleus. This Homo sapiens (Human) protein is Putative STAG3-like protein 1 (STAG3L1).